An 85-amino-acid chain; its full sequence is NAD(P)H-quinone oxidoreductase subunit O (85 aa).

Belongs to the complex I NdhO subunit family. NDH-1 can be composed of about 15 different subunits; different subcomplexes with different compositions have been identified which probably have different functions.

Its subcellular location is the cellular thylakoid membrane. It carries out the reaction a plastoquinone + NADH + (n+1) H(+)(in) = a plastoquinol + NAD(+) + n H(+)(out). The enzyme catalyses a plastoquinone + NADPH + (n+1) H(+)(in) = a plastoquinol + NADP(+) + n H(+)(out). Functionally, NDH-1 shuttles electrons from an unknown electron donor, via FMN and iron-sulfur (Fe-S) centers, to quinones in the respiratory and/or the photosynthetic chain. The immediate electron acceptor for the enzyme in this species is believed to be plastoquinone. Couples the redox reaction to proton translocation, and thus conserves the redox energy in a proton gradient. Cyanobacterial NDH-1 also plays a role in inorganic carbon-concentration. This chain is NAD(P)H-quinone oxidoreductase subunit O, found in Synechococcus sp. (strain WH7803).